The following is a 187-amino-acid chain: Potassium-transporting ATPase KdpC subunit (187 aa).

A helical transmembrane segment spans residues 10 to 30 (LVAATMLICVAGYSAAVWAVG).

Belongs to the KdpC family. The system is composed of three essential subunits: KdpA, KdpB and KdpC.

Its subcellular location is the cell inner membrane. Part of the high-affinity ATP-driven potassium transport (or Kdp) system, which catalyzes the hydrolysis of ATP coupled with the electrogenic transport of potassium into the cytoplasm. This subunit acts as a catalytic chaperone that increases the ATP-binding affinity of the ATP-hydrolyzing subunit KdpB by the formation of a transient KdpB/KdpC/ATP ternary complex. The chain is Potassium-transporting ATPase KdpC subunit from Parvibaculum lavamentivorans (strain DS-1 / DSM 13023 / NCIMB 13966).